The following is a 321-amino-acid chain: NADPH-dependent codeinone reductase 1-3 (321 aa).

NADPH is bound by residues Thr27 and Asp51. Residues Tyr56 and His119 each act as proton donor in the active site. Substrate is bound at residue His119. Residues Gln187, Ser214, Leu216, Ser264, and Arg269 each contribute to the NADPH site. A disordered region spans residues Ala300–Asp321.

Belongs to the aldo/keto reductase family. As to expression, latex secreting cells (laticifer cells). Expressed constitutively in all organs with highest levels in capsules. Restricted to the parietal region of sieve elements adjacent or proximal to laticifers in roots, stems, leaves and carpels.

The protein localises to the cytoplasm. It is found in the cytosol. It catalyses the reaction codeine + NADP(+) = codeinone + NADPH + H(+). It carries out the reaction neopine + NADP(+) = neopinone + NADPH + H(+). The enzyme catalyses morphine + NADP(+) = morphinone + NADPH + H(+). The catalysed reaction is neomorphine + NADP(+) = neomorphinone + NADPH + H(+). It functions in the pathway alkaloid biosynthesis; morphine biosynthesis. Functionally, NADPH-dependent codeinone reductase involved in biosynthesis of morphinan-type benzylisoquinoline and opiate alkaloids natural products. Reduces codeinone to codeine in the penultimate step in morphine biosynthesis. Can use morphinone, hydrocodone and hydromorphone as substrate during reductive reaction with NADPH as cofactor, and morphine and dihydrocodeine as substrate during oxidative reaction with NADP as cofactor. Converts morphinone to morphine, and neomorphinone to neomorphine. Reduces irreversibly neopinone, a spontaneous isomer of codeinone, to neopine; in planta, neopine levels are limited to low levels. This is NADPH-dependent codeinone reductase 1-3 from Papaver somniferum (Opium poppy).